The primary structure comprises 200 residues: RNA-binding protein with multiple splicing 2 (200 aa).

In terms of domain architecture, RRM spans 22 to 99 (RTLFVSGLPV…QTLRLEFAKA (78 aa)). The interval 32-42 (DIKPRELYLLF) is important for homodimerization.

As to quaternary structure, homodimer. In terms of tissue distribution, expressed in developing heart.

The protein resides in the cytoplasm. Its subcellular location is the nucleus. It localises to the stress granule. Its function is as follows. RNA-binding protein involved in the regulation of smooth muscle cell differentiation and proliferation in the gastrointestinal system. Binds NOG mRNA, the major inhibitor of the bone morphogenetic protein (BMP) pathway. Mediates an increase of NOG mRNA levels, thereby contributing to the negative regulation of BMP signaling pathway and promoting reversible dedifferentiation and proliferation of smooth muscle cells. Acts as a pre-mRNA alternative splicing regulator. Mediates ACTN1 and FLNB alternative splicing. Likely binds to mRNA tandem CAC trinucleotide or CA dinucleotide motifs. The chain is RNA-binding protein with multiple splicing 2 from Gallus gallus (Chicken).